Consider the following 131-residue polypeptide: Profilin-10 (131 aa).

Cysteines 13 and 115 form a disulfide. The Involved in PIP2 interaction signature appears at 81 to 97 (AVIRGKKGAGGITIKKT). Residue threonine 111 is modified to Phosphothreonine.

This sequence belongs to the profilin family. As to quaternary structure, occurs in many kinds of cells as a complex with monomeric actin in a 1:1 ratio. In terms of processing, phosphorylated by MAP kinases.

Its subcellular location is the cytoplasm. The protein localises to the cytoskeleton. Functionally, binds to actin and affects the structure of the cytoskeleton. At high concentrations, profilin prevents the polymerization of actin, whereas it enhances it at low concentrations. In Phleum pratense (Common timothy), this protein is Profilin-10.